A 431-amino-acid polypeptide reads, in one-letter code: Trigger factor (431 aa).

In terms of domain architecture, PPIase FKBP-type spans 160 to 245 (EDRVTIDFSG…LKKVEVMVLP (86 aa)).

The protein belongs to the FKBP-type PPIase family. Tig subfamily.

The protein localises to the cytoplasm. The catalysed reaction is [protein]-peptidylproline (omega=180) = [protein]-peptidylproline (omega=0). Involved in protein export. Acts as a chaperone by maintaining the newly synthesized protein in an open conformation. Functions as a peptidyl-prolyl cis-trans isomerase. The protein is Trigger factor of Actinobacillus succinogenes (strain ATCC 55618 / DSM 22257 / CCUG 43843 / 130Z).